Here is a 201-residue protein sequence, read N- to C-terminus: Probable quinol oxidase subunit 3 (201 aa).

5 helical membrane passes run Leu-20–Leu-40, Leu-62–Tyr-82, Leu-91–Ile-111, Phe-133–Cys-153, and Phe-172–Val-192.

This sequence belongs to the cytochrome c oxidase subunit 3 family.

Its subcellular location is the cell membrane. The catalysed reaction is 2 a quinol + O2 = 2 a quinone + 2 H2O. In terms of biological role, catalyzes quinol oxidation with the concomitant reduction of oxygen to water. This Staphylococcus aureus (strain MSSA476) protein is Probable quinol oxidase subunit 3 (qoxC).